A 237-amino-acid chain; its full sequence is Chalcone--flavanone isomerase 1 (237 aa).

T48, N113, and S190 together coordinate substrate.

This sequence belongs to the chalcone isomerase family.

It catalyses the reaction a chalcone = a flavanone.. It functions in the pathway secondary metabolite biosynthesis; flavonoid biosynthesis. Functionally, catalyzes the intramolecular cyclization of bicyclic chalcones into tricyclic (S)-flavanones. Responsible for the isomerization of 4,2',4',6'-tetrahydroxychalcone (also termed chalcone) into naringenin. The sequence is that of Chalcone--flavanone isomerase 1 (CHI1) from Fragaria ananassa (Strawberry).